We begin with the raw amino-acid sequence, 609 residues long: Isopenicillin N epimerase component 1 (609 aa).

An AMP-binding site is contributed by 185–196 (MLSGSGTTGLPK). Residues 545–570 (STDNHKHNKVPLRDEGVDPRSMGSKV) are disordered.

It belongs to the ATP-dependent AMP-binding enzyme family.

The enzyme catalyses isopenicillin N = penicillin N. It participates in antibiotic biosynthesis; cephalosporin C biosynthesis. Together with cefD2, catalyzes the reversible isomerization between isopenicillin N and penicillin N. This two-component IPN epimerase system may function by two sequential steps, an activation of isopenicillin N by the acyl-CoA synthase component cefD1, followed by epimerization by the acyl-CoA racemase component cefD2. This is Isopenicillin N epimerase component 1 (cefD1) from Hapsidospora chrysogena (Acremonium chrysogenum).